Here is a 45-residue protein sequence, read N- to C-terminus: Photosystem II reaction center protein K (45 aa).

A propeptide spanning residues 1–8 is cleaved from the precursor; that stretch reads METIYLLA. A helical membrane pass occupies residues 16 to 40; the sequence is IFDPLVDVLPVIPLFFLALAFVWQA.

This sequence belongs to the PsbK family. As to quaternary structure, PSII is composed of 1 copy each of membrane proteins PsbA, PsbB, PsbC, PsbD, PsbE, PsbF, PsbH, PsbI, PsbJ, PsbK, PsbL, PsbM, PsbT, PsbX, PsbY, PsbZ, Psb30/Ycf12, peripheral proteins PsbO, CyanoQ (PsbQ), PsbU, PsbV and a large number of cofactors. It forms dimeric complexes.

It localises to the cellular thylakoid membrane. In terms of biological role, one of the components of the core complex of photosystem II (PSII). PSII is a light-driven water:plastoquinone oxidoreductase that uses light energy to abstract electrons from H(2)O, generating O(2) and a proton gradient subsequently used for ATP formation. It consists of a core antenna complex that captures photons, and an electron transfer chain that converts photonic excitation into a charge separation. In Synechocystis sp. (strain ATCC 27184 / PCC 6803 / Kazusa), this protein is Photosystem II reaction center protein K.